A 351-amino-acid polypeptide reads, in one-letter code: uncharacterized protein (351 aa).

Mn(2+) is bound by residues aspartate 215, aspartate 226, histidine 290, glutamate 319, and glutamate 333.

It belongs to the peptidase M24B family. The cofactor is Mn(2+).

This is an uncharacterized protein from Staphylococcus aureus (strain MRSA252).